Here is a 118-residue protein sequence, read N- to C-terminus: MFRAGFKRFWNHPAGPKTVHFWAPAMKWTLVLSGIGDYARSPEYLSIRQYAALCATGAIWTRWSLIVRPKNYFNATVNFFLAIVGAVQVSRILVYQRQQKRITAQSEQRTELARSLAA.

A run of 3 helical transmembrane segments spans residues 19–35 (VHFW…LSGI), 50–66 (YAAL…WSLI), and 72–94 (YFNA…RILV).

It belongs to the mitochondrial pyruvate carrier (MPC) (TC 2.A.105) family. As to quaternary structure, the functional 150 kDa pyruvate import complex is a heteromer of mpc1 and mpc2.

The protein resides in the mitochondrion inner membrane. Functionally, mediates the uptake of pyruvate into mitochondria. The sequence is that of Probable mitochondrial pyruvate carrier 2 from Schizosaccharomyces pombe (strain 972 / ATCC 24843) (Fission yeast).